Consider the following 381-residue polypeptide: Homoserine O-succinyltransferase (381 aa).

One can recognise an AB hydrolase-1 domain in the interval 45–360 (NAVLVCHALN…PHGHDAFLLD (316 aa)). Ser151 functions as the Nucleophile in the catalytic mechanism. Arg221 is a binding site for substrate. Active-site residues include Asp321 and His354. Position 355 (Asp355) interacts with substrate.

The protein belongs to the AB hydrolase superfamily. MetX family. In terms of assembly, homodimer.

Its subcellular location is the cytoplasm. It carries out the reaction L-homoserine + succinyl-CoA = O-succinyl-L-homoserine + CoA. The protein operates within amino-acid biosynthesis; L-methionine biosynthesis via de novo pathway; O-succinyl-L-homoserine from L-homoserine: step 1/1. Transfers a succinyl group from succinyl-CoA to L-homoserine, forming succinyl-L-homoserine. The polypeptide is Homoserine O-succinyltransferase (Burkholderia multivorans (strain ATCC 17616 / 249)).